We begin with the raw amino-acid sequence, 240 residues long: MTNMSRVERRKAQNLYEDQNAALADDYVDDGESLPTRQSVKNQREQKKKQGKTKTPLFTVLAVIFVFVPVIVLVTLFYLKSHPDNHDDYEDVFIDSSQSKYEVVPKSEDKNDTADTKETALQKESKKEPEDSKPKEQTAADKKQTAVAEKEDSPNKEEATAAAASSSQSTVQQQEQPAEPVQNVPNRVVKHTVQKKETLYRISMKYYKSRTGEEKIRAYNHLNGNDVYTGQVLDIPLMDE.

A disordered region spans residues 26-52 (DYVDDGESLPTRQSVKNQREQKKKQGK). Residues 57 to 77 (LFTVLAVIFVFVPVIVLVTLF) form a helical membrane-spanning segment. The tract at residues 100-185 (KYEVVPKSED…QPAEPVQNVP (86 aa)) is disordered. Over residues 103 to 159 (VVPKSEDKNDTADTKETALQKESKKEPEDSKPKEQTAADKKQTAVAEKEDSPNKEEA) the composition is skewed to basic and acidic residues. Positions 160–185 (TAAAASSSQSTVQQQEQPAEPVQNVP) are enriched in low complexity. The 47-residue stretch at 189-235 (VKHTVQKKETLYRISMKYYKSRTGEEKIRAYNHLNGNDVYTGQVLDI) folds into the LysM domain.

It localises to the membrane. This is an uncharacterized protein from Bacillus subtilis (strain 168).